Here is a 259-residue protein sequence, read N- to C-terminus: Flap endonuclease Xni (259 aa).

A Mg(2+)-binding site is contributed by D109. The 5'-3' exonuclease domain occupies 165 to 255 (LKPEQLADYW…FNLQDIRYEK (91 aa)). Residues L176, A177, I187, and V190 each coordinate K(+). The tract at residues 189-194 (GVGPKA) is interaction with DNA.

Belongs to the Xni family. Requires Mg(2+) as cofactor. The cofactor is K(+).

Its function is as follows. Has flap endonuclease activity. During DNA replication, flap endonucleases cleave the 5'-overhanging flap structure that is generated by displacement synthesis when DNA polymerase encounters the 5'-end of a downstream Okazaki fragment. This Aliivibrio fischeri (strain ATCC 700601 / ES114) (Vibrio fischeri) protein is Flap endonuclease Xni.